We begin with the raw amino-acid sequence, 407 residues long: Queuine tRNA-ribosyltransferase-like protein (407 aa).

It belongs to the queuine tRNA-ribosyltransferase family.

The sequence is that of Queuine tRNA-ribosyltransferase-like protein from Plasmodium falciparum (isolate 3D7).